Reading from the N-terminus, the 210-residue chain is N-(5'-phosphoribosyl)anthranilate isomerase (210 aa).

The protein belongs to the TrpF family.

The enzyme catalyses N-(5-phospho-beta-D-ribosyl)anthranilate = 1-(2-carboxyphenylamino)-1-deoxy-D-ribulose 5-phosphate. It participates in amino-acid biosynthesis; L-tryptophan biosynthesis; L-tryptophan from chorismate: step 3/5. The chain is N-(5'-phosphoribosyl)anthranilate isomerase from Nostoc punctiforme (strain ATCC 29133 / PCC 73102).